A 200-amino-acid polypeptide reads, in one-letter code: Putative vacuolar protein sorting-associated protein 24 homolog 2 (200 aa).

Positions 2–23 form a coiled coil; it reads TIKSLLSDIEREERNVHKAIKD.

This sequence belongs to the SNF7 family. Component of the endosomal sorting required for transport complex III (ESCRT-III), composed at least of VPS2, VPS20, VPS24 and VPS32.

It localises to the endosome. Functionally, component of the ESCRT-III complex, which is required for multivesicular bodies (MVBs) formation and sorting of endosomal cargo proteins into MVBs. The ESCRT-III complex is probably involved in the concentration of MVB cargo. This Arabidopsis thaliana (Mouse-ear cress) protein is Putative vacuolar protein sorting-associated protein 24 homolog 2 (VPS24-2).